The primary structure comprises 28 residues: Dolichyl-diphosphooligosaccharide--protein glycosyltransferase subunit 1 (28 aa).

The protein belongs to the OST1 family. As to quaternary structure, component of the oligosaccharyltransferase (OST) complex.

It localises to the endoplasmic reticulum membrane. It functions in the pathway protein modification; protein glycosylation. Its function is as follows. Subunit of the oligosaccharyl transferase (OST) complex that catalyzes the initial transfer of a defined glycan (Glc(3)Man(9)GlcNAc(2) in eukaryotes) from the lipid carrier dolichol-pyrophosphate to an asparagine residue within an Asn-X-Ser/Thr consensus motif in nascent polypeptide chains, the first step in protein N-glycosylation. N-glycosylation occurs cotranslationally and the complex associates with the Sec61 complex at the channel-forming translocon complex that mediates protein translocation across the endoplasmic reticulum (ER). All subunits are required for a maximal enzyme activity. The protein is Dolichyl-diphosphooligosaccharide--protein glycosyltransferase subunit 1 of Gallus gallus (Chicken).